A 391-amino-acid polypeptide reads, in one-letter code: Methylthioribose-1-phosphate isomerase (391 aa).

Residue aspartate 267 is the Proton donor of the active site.

Belongs to the eIF-2B alpha/beta/delta subunits family. MtnA subfamily.

The protein localises to the cytoplasm. It localises to the nucleus. The enzyme catalyses 5-(methylsulfanyl)-alpha-D-ribose 1-phosphate = 5-(methylsulfanyl)-D-ribulose 1-phosphate. It participates in amino-acid biosynthesis; L-methionine biosynthesis via salvage pathway; L-methionine from S-methyl-5-thio-alpha-D-ribose 1-phosphate: step 1/6. Functionally, catalyzes the interconversion of methylthioribose-1-phosphate (MTR-1-P) into methylthioribulose-1-phosphate (MTRu-1-P). In Ajellomyces capsulatus (strain NAm1 / WU24) (Darling's disease fungus), this protein is Methylthioribose-1-phosphate isomerase.